The chain runs to 23 residues: Coenzyme PQQ synthesis protein A (23 aa).

The pyrroloquinoline quinone (Glu-Tyr) cross-link spans glutamate 15–tyrosine 19.

The protein belongs to the PqqA family.

It participates in cofactor biosynthesis; pyrroloquinoline quinone biosynthesis. Its function is as follows. Required for coenzyme pyrroloquinoline quinone (PQQ) biosynthesis. PQQ is probably formed by cross-linking a specific glutamate to a specific tyrosine residue and excising these residues from the peptide. This chain is Coenzyme PQQ synthesis protein A, found in Pseudomonas putida (strain W619).